A 286-amino-acid polypeptide reads, in one-letter code: 4-diphosphocytidyl-2-C-methyl-D-erythritol kinase (286 aa).

Lys11 is a catalytic residue. 93–103 is an ATP binding site; sequence PFGAGLGGGSS. Asp135 is an active-site residue.

Belongs to the GHMP kinase family. IspE subfamily.

It catalyses the reaction 4-CDP-2-C-methyl-D-erythritol + ATP = 4-CDP-2-C-methyl-D-erythritol 2-phosphate + ADP + H(+). It functions in the pathway isoprenoid biosynthesis; isopentenyl diphosphate biosynthesis via DXP pathway; isopentenyl diphosphate from 1-deoxy-D-xylulose 5-phosphate: step 3/6. Functionally, catalyzes the phosphorylation of the position 2 hydroxy group of 4-diphosphocytidyl-2C-methyl-D-erythritol. The sequence is that of 4-diphosphocytidyl-2-C-methyl-D-erythritol kinase from Prosthecochloris aestuarii (strain DSM 271 / SK 413).